A 471-amino-acid polypeptide reads, in one-letter code: 6-phosphofructo-2-kinase/fructose-2,6-bisphosphatase 1 (471 aa).

The residue at position 2 (Ser2) is an N-acetylserine. The tract at residues 2-250 (SREMGELTQT…AYYLMNIHVT (249 aa)) is 6-phosphofructo-2-kinase. Ser33 carries the phosphoserine; by PKA modification. 49–57 (GLPARGKTY) serves as a coordination point for ATP. Beta-D-fructose 6-phosphate-binding residues include Arg82 and Arg105. Asp131 is a catalytic residue. Beta-D-fructose 6-phosphate-binding residues include Thr133 and Arg139. Ser141 is subject to Phosphoserine. The active site involves Cys161. 170–175 (NIKQVK) is an ATP binding site. The beta-D-fructose 6-phosphate site is built by Lys175, Arg196, and Tyr200. The fructose-2,6-bisphosphatase stretch occupies residues 251–471 (PRSIYLCRHG…EALDTVPAHY (221 aa)). Beta-D-fructose 2,6-bisphosphate is bound at residue Arg258. The active-site Tele-phosphohistidine intermediate is the His259. Positions 265, 271, and 308 each coordinate beta-D-fructose 2,6-bisphosphate. The active-site Proton donor/acceptor is Glu328. Beta-D-fructose 2,6-bisphosphate contacts are provided by Tyr339, Arg353, Lys357, Tyr368, Gln394, and Arg398. Residue 350-353 (FALR) participates in ATP binding. ATP is bound by residues 394-398 (QAVMR) and Tyr430.

It in the C-terminal section; belongs to the phosphoglycerate mutase family. In terms of assembly, homodimer. Liver.

It carries out the reaction beta-D-fructose 2,6-bisphosphate + H2O = beta-D-fructose 6-phosphate + phosphate. The catalysed reaction is beta-D-fructose 6-phosphate + ATP = beta-D-fructose 2,6-bisphosphate + ADP + H(+). Its activity is regulated as follows. Phosphorylation at Ser-33 inhibits the kinase and activates the bisphosphatase. Synthesis and degradation of fructose 2,6-bisphosphate. The protein is 6-phosphofructo-2-kinase/fructose-2,6-bisphosphatase 1 of Rattus norvegicus (Rat).